A 308-amino-acid polypeptide reads, in one-letter code: MQKVVAIVGPTAVGKTSLAIEIAKKLDGEIVSGDSMQIYKEVAIGTAKASREEQAEVKHYLVDAHSVFEDFSVKNFVDEARSAIGEIAGKGKLPIIAGGTGFYVNALLNDMQLGDKEEEAASVDPEWEVFLAANGPQALWEELNKKDPEAAKKIPVANSRRSLRALSVISRTGGLFSKQQAEIKPRYDYLIIGLNSDREAIYQRINQRVDLMMEAGLLEEARFVYEHRAGEHQVLQAIGYKEFFPYFAGEASLETCVMALKTASRRYAKRQLTYFRNKLPVEWYDPLTDPNCANRIAVRIEEWMKEEK.

Residue 9 to 16 coordinates ATP; sequence GPTAVGKT. Position 11-16 (11-16) interacts with substrate; that stretch reads TAVGKT. The segment at 34-37 is interaction with substrate tRNA; the sequence is DSMQ.

The protein belongs to the IPP transferase family. As to quaternary structure, monomer. Requires Mg(2+) as cofactor.

It carries out the reaction adenosine(37) in tRNA + dimethylallyl diphosphate = N(6)-dimethylallyladenosine(37) in tRNA + diphosphate. Catalyzes the transfer of a dimethylallyl group onto the adenine at position 37 in tRNAs that read codons beginning with uridine, leading to the formation of N6-(dimethylallyl)adenosine (i(6)A). This is tRNA dimethylallyltransferase from Lactobacillus delbrueckii subsp. bulgaricus (strain ATCC BAA-365 / Lb-18).